A 595-amino-acid chain; its full sequence is Elongation factor 4 (595 aa).

Residues 1–183 (MNVRNFSIIA…AIVERIPPPP (183 aa)) enclose the tr-type G domain. GTP-binding positions include 13 to 18 (DHGKST) and 130 to 133 (NKID).

Belongs to the TRAFAC class translation factor GTPase superfamily. Classic translation factor GTPase family. LepA subfamily.

It localises to the cell membrane. The catalysed reaction is GTP + H2O = GDP + phosphate + H(+). In terms of biological role, required for accurate and efficient protein synthesis under certain stress conditions. May act as a fidelity factor of the translation reaction, by catalyzing a one-codon backward translocation of tRNAs on improperly translocated ribosomes. Back-translocation proceeds from a post-translocation (POST) complex to a pre-translocation (PRE) complex, thus giving elongation factor G a second chance to translocate the tRNAs correctly. Binds to ribosomes in a GTP-dependent manner. This chain is Elongation factor 4, found in Deinococcus geothermalis (strain DSM 11300 / CIP 105573 / AG-3a).